We begin with the raw amino-acid sequence, 337 residues long: Methionyl-tRNA formyltransferase (337 aa).

A (6S)-5,6,7,8-tetrahydrofolate-binding site is contributed by 116 to 119; it reads SILP.

Belongs to the Fmt family.

The catalysed reaction is L-methionyl-tRNA(fMet) + (6R)-10-formyltetrahydrofolate = N-formyl-L-methionyl-tRNA(fMet) + (6S)-5,6,7,8-tetrahydrofolate + H(+). Functionally, attaches a formyl group to the free amino group of methionyl-tRNA(fMet). The formyl group appears to play a dual role in the initiator identity of N-formylmethionyl-tRNA by promoting its recognition by IF2 and preventing the misappropriation of this tRNA by the elongation apparatus. This is Methionyl-tRNA formyltransferase from Desulfovibrio desulfuricans (strain ATCC 27774 / DSM 6949 / MB).